A 280-amino-acid chain; its full sequence is Golgi to ER traffic protein 2 (280 aa).

Topologically, residues 1 to 149 are cytoplasmic; it reads MPSDREKQRI…IAYNLYQQRK (149 aa). The tract at residues 15–59 is disordered; it reads RQAKMAKGGASDRLNKILSQGSSVKTSAVSVLDQPQPADHDPEGM. The span at 31–43 shows a compositional bias: polar residues; that stretch reads ILSQGSSVKTSAV. A helical membrane pass occupies residues 150–170; that stretch reads VRHRFLVVRMVSILANFVYHF. Residues 171 to 197 are Lumenal-facing; the sequence is LTISDFSFSPSANPFIRSIPPTSSVSS. The helical transmembrane segment at 198–217 threads the bilayer; it reads FFQIFVAIEAVLVAAYIAAS. At 218-257 the chain is on the cytoplasmic side; the sequence is RNVPSNNNGLLVKGISMAAMFVPKLQRFQPLIMKIIGCWD. A helical transmembrane segment spans residues 258–278; the sequence is TVTFVLNDLGLVVLLFGLISF. Residues 279 to 280 are Lumenal-facing; that stretch reads RR.

This sequence belongs to the GET2 family. In terms of assembly, component of the Golgi to ER traffic (GET) complex, which is composed of GET1, GET2 and GET3. Within the complex, GET1 and GET2 form a heterotetramer which is stabilized by phosphatidylinositol binding and which binds to the GET3 homodimer.

It localises to the endoplasmic reticulum membrane. It is found in the golgi apparatus membrane. In terms of biological role, required for the post-translational delivery of tail-anchored (TA) proteins to the endoplasmic reticulum. Together with GET1, acts as a membrane receptor for soluble GET3, which recognizes and selectively binds the transmembrane domain of TA proteins in the cytosol. The GET complex cooperates with the HDEL receptor ERD2 to mediate the ATP-dependent retrieval of resident ER proteins that contain a C-terminal H-D-E-L retention signal from the Golgi to the ER. This Meyerozyma guilliermondii (strain ATCC 6260 / CBS 566 / DSM 6381 / JCM 1539 / NBRC 10279 / NRRL Y-324) (Yeast) protein is Golgi to ER traffic protein 2.